Reading from the N-terminus, the 398-residue chain is Putative molybdopterin biosynthesis protein MJ0666 (398 aa).

It belongs to the MoeA family.

It participates in cofactor biosynthesis; molybdopterin biosynthesis. This Methanocaldococcus jannaschii (strain ATCC 43067 / DSM 2661 / JAL-1 / JCM 10045 / NBRC 100440) (Methanococcus jannaschii) protein is Putative molybdopterin biosynthesis protein MJ0666.